The sequence spans 553 residues: Hydroxylamine reductase (553 aa).

[2Fe-2S] cluster-binding residues include C3, C6, C18, and C25. Hybrid [4Fe-2O-2S] cluster is bound by residues H249, E273, C317, C405, C433, C459, E493, and K495. Position 405 is a cysteine persulfide (C405).

It belongs to the HCP family. The cofactor is [2Fe-2S] cluster. Hybrid [4Fe-2O-2S] cluster serves as cofactor.

The protein localises to the cytoplasm. It catalyses the reaction A + NH4(+) + H2O = hydroxylamine + AH2 + H(+). Catalyzes the reduction of hydroxylamine to form NH(3) and H(2)O. The protein is Hydroxylamine reductase of Mannheimia succiniciproducens (strain KCTC 0769BP / MBEL55E).